The chain runs to 429 residues: Histidinol dehydrogenase (429 aa).

Residues tyrosine 127, glutamine 188, and asparagine 211 each contribute to the NAD(+) site. Substrate contacts are provided by serine 234, glutamine 256, and histidine 259. Zn(2+)-binding residues include glutamine 256 and histidine 259. Active-site proton acceptor residues include glutamate 324 and histidine 325. Substrate contacts are provided by histidine 325, aspartate 358, glutamate 412, and histidine 417. Aspartate 358 is a Zn(2+) binding site. Zn(2+) is bound at residue histidine 417.

The protein belongs to the histidinol dehydrogenase family. Requires Zn(2+) as cofactor.

It carries out the reaction L-histidinol + 2 NAD(+) + H2O = L-histidine + 2 NADH + 3 H(+). Its pathway is amino-acid biosynthesis; L-histidine biosynthesis; L-histidine from 5-phospho-alpha-D-ribose 1-diphosphate: step 9/9. Its function is as follows. Catalyzes the sequential NAD-dependent oxidations of L-histidinol to L-histidinaldehyde and then to L-histidine. This is Histidinol dehydrogenase from Bacillus anthracis.